A 432-amino-acid polypeptide reads, in one-letter code: Serine hydroxymethyltransferase 1 (432 aa).

(6S)-5,6,7,8-tetrahydrofolate contacts are provided by residues leucine 131 and 135–137; that span reads GHL. Lysine 240 is modified (N6-(pyridoxal phosphate)lysine).

It belongs to the SHMT family. As to quaternary structure, homodimer. Pyridoxal 5'-phosphate serves as cofactor.

The protein resides in the cytoplasm. The catalysed reaction is (6R)-5,10-methylene-5,6,7,8-tetrahydrofolate + glycine + H2O = (6S)-5,6,7,8-tetrahydrofolate + L-serine. Its pathway is one-carbon metabolism; tetrahydrofolate interconversion. It functions in the pathway amino-acid biosynthesis; glycine biosynthesis; glycine from L-serine: step 1/1. Its function is as follows. Catalyzes the reversible interconversion of serine and glycine with tetrahydrofolate (THF) serving as the one-carbon carrier. This reaction serves as the major source of one-carbon groups required for the biosynthesis of purines, thymidylate, methionine, and other important biomolecules. Also exhibits THF-independent aldolase activity toward beta-hydroxyamino acids, producing glycine and aldehydes, via a retro-aldol mechanism. This chain is Serine hydroxymethyltransferase 1, found in Rhodopseudomonas palustris (strain ATCC BAA-98 / CGA009).